A 523-amino-acid chain; its full sequence is Magnesium/proton exchanger 1 (523 aa).

11 helical membrane passes run 24–44 (LLPIGVRAFIYTAVLAYCFIG), 88–108 (IADVALLAFGTSFPQISLATI), 125–145 (GTLVGSAAFDLFPIHAVCVVM), 157–177 (LGVWLVELFWSFWAYIWLYII), 185–205 (VITLWEALLTVLQYGLLLLHA), 325–345 (VIGISWNLIIAPWKMLFAFVP), 349–369 (IAHGWIAFICSLIFISGIAYG), 377–397 (ISCVTGVSPYVIAFTALAAGT), 428–448 (VNIYVGIGVPWLVDTMYNYFV), 461–481 (LSFSLLVFFATSFGCITVLVL), and 495–515 (MWAWATSVYFMILWVVFVVLS).

This sequence belongs to the Ca(2+):cation antiporter (CaCA) (TC 2.A.19) family. MHX subfamily.

The protein localises to the vacuole membrane. Its function is as follows. Vacuolar transporter that exchanges protons with Mg(2+), Zn(2+) and Fe(2+) ions. May control the partitioning of Mg(2+) and Zn(2+) between plant organs. In Oryza sativa subsp. japonica (Rice), this protein is Magnesium/proton exchanger 1 (MHX1).